The chain runs to 395 residues: S-adenosylmethionine synthase (395 aa).

Residue His-12 coordinates ATP. Asp-14 is a binding site for Mg(2+). Glu-40 is a K(+) binding site. 2 residues coordinate L-methionine: Glu-53 and Gln-96. Residues 96–106 (QSKEIADAVNF) form a flexible loop region. ATP is bound by residues 174 to 176 (DGK), 242 to 243 (RF), Asp-251, 257 to 258 (RK), Ala-274, and Lys-278. Asp-251 contacts L-methionine. L-methionine is bound at residue Lys-282.

It belongs to the AdoMet synthase family. In terms of assembly, homotetramer; dimer of dimers. Requires Mg(2+) as cofactor. K(+) serves as cofactor.

Its subcellular location is the cytoplasm. The catalysed reaction is L-methionine + ATP + H2O = S-adenosyl-L-methionine + phosphate + diphosphate. Its pathway is amino-acid biosynthesis; S-adenosyl-L-methionine biosynthesis; S-adenosyl-L-methionine from L-methionine: step 1/1. Its function is as follows. Catalyzes the formation of S-adenosylmethionine (AdoMet) from methionine and ATP. The overall synthetic reaction is composed of two sequential steps, AdoMet formation and the subsequent tripolyphosphate hydrolysis which occurs prior to release of AdoMet from the enzyme. This chain is S-adenosylmethionine synthase, found in Tropheryma whipplei (strain TW08/27) (Whipple's bacillus).